The primary structure comprises 430 residues: tRNA(Ile)-lysidine synthase (430 aa).

Position 21 to 26 (serine 21 to serine 26) interacts with ATP.

This sequence belongs to the tRNA(Ile)-lysidine synthase family.

The protein resides in the cytoplasm. The enzyme catalyses cytidine(34) in tRNA(Ile2) + L-lysine + ATP = lysidine(34) in tRNA(Ile2) + AMP + diphosphate + H(+). Ligates lysine onto the cytidine present at position 34 of the AUA codon-specific tRNA(Ile) that contains the anticodon CAU, in an ATP-dependent manner. Cytidine is converted to lysidine, thus changing the amino acid specificity of the tRNA from methionine to isoleucine. This is tRNA(Ile)-lysidine synthase from Salmonella dublin (strain CT_02021853).